Reading from the N-terminus, the 129-residue chain is Glycine cleavage system H protein (129 aa).

One can recognise a Lipoyl-binding domain in the interval 24–106; it reads LLKIGVSEFA…IGEGWLVILK (83 aa). At Lys65 the chain carries N6-lipoyllysine.

This sequence belongs to the GcvH family. In terms of assembly, the glycine cleavage system is composed of four proteins: P, T, L and H. Requires (R)-lipoate as cofactor.

Its function is as follows. The glycine cleavage system catalyzes the degradation of glycine. The H protein shuttles the methylamine group of glycine from the P protein to the T protein. This chain is Glycine cleavage system H protein, found in Prochlorococcus marinus (strain AS9601).